The sequence spans 218 residues: Cytidylate kinase (218 aa).

21–29 (GPAASGKGT) is an ATP binding site.

It belongs to the cytidylate kinase family. Type 1 subfamily.

The protein localises to the cytoplasm. It catalyses the reaction CMP + ATP = CDP + ADP. The enzyme catalyses dCMP + ATP = dCDP + ADP. The sequence is that of Cytidylate kinase from Rickettsia canadensis (strain McKiel).